The sequence spans 77 residues: Small ribosomal subunit protein bS18 (77 aa).

It belongs to the bacterial ribosomal protein bS18 family. In terms of assembly, part of the 30S ribosomal subunit. Forms a tight heterodimer with protein bS6.

In terms of biological role, binds as a heterodimer with protein bS6 to the central domain of the 16S rRNA, where it helps stabilize the platform of the 30S subunit. This Lactobacillus gasseri (strain ATCC 33323 / DSM 20243 / BCRC 14619 / CIP 102991 / JCM 1131 / KCTC 3163 / NCIMB 11718 / NCTC 13722 / AM63) protein is Small ribosomal subunit protein bS18.